We begin with the raw amino-acid sequence, 274 residues long: Kit ligand (274 aa).

Residues 1-25 form the signal peptide; the sequence is MKKTQTWIITCIYLQLLLFNPLVRT. At 26-215 the chain is on the extracellular side; it reads KGICRNRVTD…ANPLGDSNLQ (190 aa). Cystine bridges form between C29/C114 and C68/C164. N-linked (GlcNAc...) asparagine glycosylation is found at N90, N97, N145, and N196. A helical membrane pass occupies residues 216-238; it reads WAAMALPAFFSLVIGFAFGALYW. At 239-274 the chain is on the cytoplasmic side; that stretch reads KKKQPNLTRTAENIQINEEDNEISMLQEKEREFQEV.

The protein belongs to the SCF family. As to quaternary structure, homodimer, non-covalently linked. Heterotetramer with KIT, binding two KIT molecules; thereby mediates KIT dimerization and subsequent activation by autophosphorylation. A soluble form is produced by proteolytic processing of isoform 1 in the extracellular domain.

The protein localises to the cytoplasm. The protein resides in the cytoskeleton. It is found in the cell membrane. It localises to the cell projection. Its subcellular location is the lamellipodium. The protein localises to the filopodium. The protein resides in the secreted. Ligand for the receptor-type protein-tyrosine kinase KIT. Plays an essential role in the regulation of cell survival and proliferation, hematopoiesis, stem cell maintenance, gametogenesis, mast cell development, migration and function, and in melanogenesis. KITLG/SCF binding can activate several signaling pathways. Promotes phosphorylation of PIK3R1, the regulatory subunit of phosphatidylinositol 3-kinase, and subsequent activation of the kinase AKT1. KITLG/SCF and KIT also transmit signals via GRB2 and activation of RAS, RAF1 and the MAP kinases MAPK1/ERK2 and/or MAPK3/ERK1. KITLG/SCF and KIT promote activation of STAT family members STAT1, STAT3 and STAT5. KITLG/SCF and KIT promote activation of PLCG1, leading to the production of the cellular signaling molecules diacylglycerol and inositol 1,4,5-trisphosphate. KITLG/SCF acts synergistically with other cytokines, probably interleukins. The chain is Kit ligand (KITLG) from Neovison vison (American mink).